The chain runs to 434 residues: Transcription initiation factor IIE subunit alpha (434 aa).

The region spanning 8-99 is the HTH TFE/IIEalpha-type domain; it reads VQRLIKMIMR…DFCSTIDSIK (92 aa). The C4-type zinc-finger motif lies at 124 to 151; sequence CPFCNKKFSSLDVLSLVTNEGTFACNVC. 3 disordered regions span residues 217-251, 357-408, and 415-434; these read QQNLSKSNSDVRLSTSSPSITVDFSADKETDEKRE, STDY…EMQE, and INGFNEDDEDDEDEADFEDV. Polar residues predominate over residues 226–238; that stretch reads DVRLSTSSPSITV. Composition is skewed to basic and acidic residues over residues 241–251 and 376–385; these read SADKETDEKRE and IQNKRTKSIE. The span at 386-399 shows a compositional bias: polar residues; that stretch reads ENNSLPPIVSTNGI. The span at 419–434 shows a compositional bias: acidic residues; the sequence is NEDDEDDEDEADFEDV.

The protein belongs to the TFIIE alpha subunit family. As to quaternary structure, TFIIE is a tetramer of two alpha (tfa1) and two beta (tfa2) subunits.

The protein resides in the nucleus. Recruits TFIIH to the initiation complex and stimulates the RNA polymerase II C-terminal domain kinase and DNA-dependent ATPase activities of TFIIH. Both TFIIH and TFIIE are required for promoter clearance by RNA polymerase. This chain is Transcription initiation factor IIE subunit alpha (tfa1), found in Schizosaccharomyces pombe (strain 972 / ATCC 24843) (Fission yeast).